Here is a 342-residue protein sequence, read N- to C-terminus: tRNA N6-adenosine threonylcarbamoyltransferase (342 aa).

H114 and H118 together coordinate Fe cation. Residues L136–G140, D169, G182, D186, and N275 contribute to the substrate site. A Fe cation-binding site is contributed by D301.

Belongs to the KAE1 / TsaD family. Fe(2+) serves as cofactor.

It is found in the cytoplasm. The enzyme catalyses L-threonylcarbamoyladenylate + adenosine(37) in tRNA = N(6)-L-threonylcarbamoyladenosine(37) in tRNA + AMP + H(+). Required for the formation of a threonylcarbamoyl group on adenosine at position 37 (t(6)A37) in tRNAs that read codons beginning with adenine. Is involved in the transfer of the threonylcarbamoyl moiety of threonylcarbamoyl-AMP (TC-AMP) to the N6 group of A37, together with TsaE and TsaB. TsaD likely plays a direct catalytic role in this reaction. The chain is tRNA N6-adenosine threonylcarbamoyltransferase from Streptococcus pyogenes serotype M2 (strain MGAS10270).